A 556-amino-acid polypeptide reads, in one-letter code: Small ribosomal subunit protein uS3m (556 aa).

Belongs to the universal ribosomal protein uS3 family. As to quaternary structure, component of the mitochondrial ribosome small subunit.

It localises to the mitochondrion. This is Small ribosomal subunit protein uS3m (RPS3) from Arabidopsis thaliana (Mouse-ear cress).